A 305-amino-acid chain; its full sequence is Ornithine carbamoyltransferase, catabolic (305 aa).

Residues 50 to 53 (STRT), Gln77, Arg101, and 128 to 131 (HPLQ) contribute to the carbamoyl phosphate site. L-ornithine is bound by residues Asn159, Asp223, and 227 to 228 (SM). Carbamoyl phosphate contacts are provided by residues 263 to 264 (CL) and Arg291.

This sequence belongs to the aspartate/ornithine carbamoyltransferase superfamily. OTCase family.

The protein resides in the cytoplasm. The enzyme catalyses carbamoyl phosphate + L-ornithine = L-citrulline + phosphate + H(+). It participates in amino-acid degradation; L-arginine degradation via ADI pathway; carbamoyl phosphate from L-arginine: step 2/2. In terms of biological role, reversibly catalyzes the transfer of the carbamoyl group from carbamoyl phosphate (CP) to the N(epsilon) atom of ornithine (ORN) to produce L-citrulline. In Thermoplasma volcanium (strain ATCC 51530 / DSM 4299 / JCM 9571 / NBRC 15438 / GSS1), this protein is Ornithine carbamoyltransferase, catabolic.